A 534-amino-acid polypeptide reads, in one-letter code: Kelch repeat and BTB domain-containing protein 4 (534 aa).

The disordered stretch occupies residues 1–25 (MKGGNADSWQREKLASMESPEEPGA). The BTB domain maps to 61–128 (ADVTISVEGR…IYHGTVKLRA (68 aa)). Residues 163 to 255 (CLQVMWLADR…SLKEIGENVH (93 aa)) form the BACK domain. 5 Kelch repeats span residues 255 to 301 (HIYL…KHGG), 302 to 344 (DLYV…SVPG), 347 to 394 (AIYS…NLNG), 396 to 446 (IYLL…VHKD), and 448 to 497 (VFIV…VFRD).

Component of the BCR(KBTBD4) E3 ubiquitin ligase complex, at least composed of CUL3, KBTBD4 and RBX1.

In terms of biological role, substrate-specific adapter of a BCR (BTB-CUL3-RBX1) E3 ubiquitin ligase complex which targets CoREST corepressor complex components RCOR1, KDM1A/LSD1 and HDAC2 for proteasomal degradation. RCOR1 is likely to be the primary target while degradation of KDM1A and HDAC2 is likely due to their association with RCOR1. Also targets RCOR3, MIER2 and MIER3 for proteasomal degradation as well as associated proteins ZNF217 and RREB1. Degradation is dependent on the presence of an ELM2 domain in the target proteins. This Homo sapiens (Human) protein is Kelch repeat and BTB domain-containing protein 4 (KBTBD4).